Consider the following 765-residue polypeptide: Nucleolar transcription factor 1 (765 aa).

Met-1 is modified (N-acetylmethionine). A disordered region spans residues 1–21; sequence MNGEADCPTDLEMAAPKGQDR. DNA-binding regions (HMG box) lie at residues 112-180 and 196-264; these read PKKP…ARFR and PEKP…RDYI. Residue Thr-201 is modified to Phosphothreonine. Phosphoserine is present on residues Ser-273, Ser-336, and Ser-364. A DNA-binding region (HMG box 3) is located at residues 298 to 362; that stretch reads TKPPPNSYSL…DYEVELLRFL (65 aa). Residues 370–379 are compositionally biased toward basic and acidic residues; the sequence is QQRVLGEEKM. Residues 370–411 form a disordered region; that stretch reads QQRVLGEEKMLNINKKQTTSPASKKPSQEGGKGGSEKPKRPV. 9 positions are modified to phosphoserine: Ser-389, Ser-412, Ser-433, Ser-435, Ser-484, Ser-495, Ser-546, Ser-584, and Ser-638. 3 DNA-binding regions (HMG box) span residues 407 to 475, 482 to 549, and 568 to 634; these read PKRP…GGER, PESP…SEMR, and KKPP…DLWV. Residues 456 to 487 are disordered; it reads YKAREAALKAQSERKPGGEREDRGKLPESPKR. A compositionally biased stretch (basic and acidic residues) spans 457 to 487; the sequence is KAREAALKAQSERKPGGEREDRGKLPESPKR. The tract at residues 546–576 is disordered; sequence SEMRAPPAATNSSKKMKFQGEPKKPPMNGYQ. The segment at 649 to 765 is disordered; that stretch reads ISNKRKNMTK…SGDSSDSGSN (117 aa). Polar residues predominate over residues 664–674; the sequence is PKSSRTTLQSK. Acidic residues predominate over residues 677–746; the sequence is SEEDDDEEEE…DDDEDEDNES (70 aa). Residues 747-765 are compositionally biased toward low complexity; that stretch reads EGSSSSSSSSGDSSDSGSN.

Homodimer. Part of Pol I pre-initiation complex (PIC), in which Pol I core assembles with RRN3 and promoter-bound UTBF and SL1/TIF-IB complex. Interacts with TOP2A in the context of Pol I complex. Interacts with TBP. Interacts with TAF1A. Interacts with RASL11A. Binds to IRS1 and PIK3CA. Interacts with DHX33. Interacts with PHF6. Interacts with CEBPA (isoform 1 and isoform 4). Interacts with DDX11. Interacts with NOP53. Interacts with ALKBH2. Phosphorylated and activated by PIK3CA.

It localises to the nucleus. It is found in the nucleolus. Its function is as follows. Recognizes the ribosomal RNA gene promoter and activates transcription mediated by RNA polymerase I through cooperative interactions with the transcription factor SL1/TIF-IB complex. It binds specifically to the upstream control element. The chain is Nucleolar transcription factor 1 (Ubtf) from Mus musculus (Mouse).